The chain runs to 144 residues: UPF0735 ACT domain-containing protein LSEI_1046 (144 aa).

An ACT domain is found at 68 to 143; the sequence is VISLMLHHDR…GVSDVHLVSV (76 aa).

It belongs to the UPF0735 family.

The polypeptide is UPF0735 ACT domain-containing protein LSEI_1046 (Lacticaseibacillus paracasei (strain ATCC 334 / BCRC 17002 / CCUG 31169 / CIP 107868 / KCTC 3260 / NRRL B-441) (Lactobacillus paracasei)).